The following is a 309-amino-acid chain: Tagatose-6-phosphate kinase (309 aa).

This sequence belongs to the carbohydrate kinase PfkB family. LacC subfamily.

It carries out the reaction D-tagatofuranose 6-phosphate + ATP = D-tagatofuranose 1,6-bisphosphate + ADP + H(+). It functions in the pathway carbohydrate metabolism; D-tagatose 6-phosphate degradation; D-glyceraldehyde 3-phosphate and glycerone phosphate from D-tagatose 6-phosphate: step 1/2. The chain is Tagatose-6-phosphate kinase from Streptococcus pneumoniae (strain P1031).